The primary structure comprises 343 residues: NADP-dependent alkenal double bond reductase P2 (343 aa).

Substrate-binding residues include Tyr-52 and Tyr-79. NADP(+) is bound by residues 164 to 167 (GAVG), Lys-190, Tyr-206, Asn-230, 252 to 258 (CGMISQY), 282 to 284 (FVV), and Asn-332.

Belongs to the NADP-dependent oxidoreductase L4BD family. In terms of assembly, homodimer.

It catalyses the reaction an n-alkanal + NAD(+) = an alk-2-enal + NADH + H(+). The catalysed reaction is an n-alkanal + NADP(+) = an alk-2-enal + NADPH + H(+). Catalyzes the reduction of the 7-8 double bond of phenylpropanal substrates, such as p-coumaryl aldehyde and coniferyl aldehyde (in vitro). Has activity towards toxic substrates, such as 4-hydroxy-(2E)-nonenal (in vitro). May play a distinct role in plant antioxidant defense and is possibly involved in NAD(P)/NAD(P)h homeostasis. The chain is NADP-dependent alkenal double bond reductase P2 (P2) from Arabidopsis thaliana (Mouse-ear cress).